The chain runs to 178 residues: Large ribosomal subunit protein uL6 (178 aa).

Positions 155-169 are enriched in basic and acidic residues; that stretch reads PYKGKGIKYDNEQIR. The disordered stretch occupies residues 155 to 178; that stretch reads PYKGKGIKYDNEQIRRKAGKSGGK.

Belongs to the universal ribosomal protein uL6 family. In terms of assembly, part of the 50S ribosomal subunit.

Functionally, this protein binds to the 23S rRNA, and is important in its secondary structure. It is located near the subunit interface in the base of the L7/L12 stalk, and near the tRNA binding site of the peptidyltransferase center. The polypeptide is Large ribosomal subunit protein uL6 (Nitratidesulfovibrio vulgaris (strain DSM 19637 / Miyazaki F) (Desulfovibrio vulgaris)).